The chain runs to 1114 residues: MRSLFSSKLSRAPASPPPPPPHAAAGGGGDAHTPSSHGHRHRRFPKENVDPSPSPGPYDHHSAYRSPSGKQQQQQPLAAKNRSLPPRPPLKRKLLDVSAASPAPEGAPSGGGGGDSGVQVVVRVRPPSRAEEEDEGAGKEVCVRKTGPGSVEIHGQGFTFDSVADEASTQEDIFQLVGRPLVENCLDGFNSSIFAYGQTGSGKTYTMWGPLSALSDDTVSKERGLTPRVFELLFSRIKEEQAKHSNKQLVYHCCCSFLEIYNEQITDLLDPVQRNLQIREDVGTSSVYVESLTKESVFTINDVTQLLEKGLANRRTEATTANAESSRSHCVFTCFIKSESKNMEDGSNFTRTSRINLVDLAGSERQKLTNAAGDRLKEAGNINRSLSQLGNLINILAEVSQSGKQRHHIPYRDSKLTFLLQESLGGNAKLAMICAVSPSQNCKSETLSTLRFAHRAKDIKNNAVVNEQREDDVNVLREQIRQLKEELQHVRSNGSLPGSNGSPSTGWNSQNSFLLKMSLSRPTAFPTIKDDSDEEMEIDDNDVEKPCNLENKSSFPHGDVETSRCKSNLAASIQKGLQVIESHRNSVTWRRSSLGLNTRLMDAHLSVPVCKVDVAIQTDPEESEPRQNTMALIPSNQPEATTDGNREISDCINLQLVTVDGSIPSNDLKQQEQVFKAVEKVLAGAIRREMLRDEQCAKQAAEIQQLKRLVQQYKHERECNAAIAQIREEKIARLETLVDGILPTEELMHAENLSLQDENKILHQKYENHPEVLSAKIELERIQEELERYRNFKDEKEVLLEEIQHLKNQLHYMLSSSMALCRPPVELVQAISTVSDRPTISALEEAGDDGHSIVDAAESRWITLTEELRVELEKSKSLSERLQLEVESEKQCSEELKGALEMAMQGHARILEQYCELQEKHASLLSMCRTINDGIEDVKKEAAKAGVRGAESKFINALARQVSILRAEREKERRFWMDENKGLQQQLSDTAEAVQAAGELLVRLNDAEEAASLAQKRAELAEQEMNKAFAEIDNLKRDHDQEVLVLNQRLAESKLPSNVVQSPEPSETGPARYDTGGSFGDEQWREEFKPFQSVEVSKSSDPSSWFYGYDKCNI.

Residues 1–119 (MRSLFSSKLS…GGGGGDSGVQ (119 aa)) form a disordered region. The segment covering 98-107 (SAASPAPEGA) has biased composition (low complexity). Residues 117-459 (GVQVVVRVRP…LRFAHRAKDI (343 aa)) form the Kinesin motor domain. 197 to 204 (GQTGSGKT) lines the ATP pocket. 2 coiled-coil regions span residues 772-810 (VLSA…KNQL) and 999-1043 (ELLV…DQEV). Positions 1055–1065 (LPSNVVQSPEP) are enriched in polar residues. Positions 1055–1081 (LPSNVVQSPEPSETGPARYDTGGSFGD) are disordered.

It belongs to the TRAFAC class myosin-kinesin ATPase superfamily. Kinesin family. KIN-12 subfamily.

The protein is Kinesin-like protein KIN-12B of Oryza sativa subsp. japonica (Rice).